The primary structure comprises 392 residues: Alanine racemase 2 (392 aa).

Lysine 40 functions as the Proton acceptor; specific for D-alanine in the catalytic mechanism. Lysine 40 is subject to N6-(pyridoxal phosphate)lysine. Position 138 (arginine 138) interacts with substrate. Tyrosine 266 (proton acceptor; specific for L-alanine) is an active-site residue. Methionine 314 contacts substrate.

The protein belongs to the alanine racemase family. Pyridoxal 5'-phosphate serves as cofactor.

The catalysed reaction is L-alanine = D-alanine. It participates in amino-acid biosynthesis; D-alanine biosynthesis; D-alanine from L-alanine: step 1/1. In terms of biological role, catalyzes the interconversion of L-alanine and D-alanine. May also act on other amino acids. This Oceanobacillus iheyensis (strain DSM 14371 / CIP 107618 / JCM 11309 / KCTC 3954 / HTE831) protein is Alanine racemase 2 (alr2).